A 479-amino-acid polypeptide reads, in one-letter code: Probable periplasmic serine endoprotease DegP-like (479 aa).

The signal sequence occupies residues 1–27 (MSIPRLKSYLSMFAAVLMLGQVLSAQA). Residues histidine 117, aspartate 147, and serine 220 each act as charge relay system in the active site. Substrate contacts are provided by residues 218–220 (GNS) and 275–279 (LGVVI). PDZ domains lie at 264–355 (LKKD…IRNG) and 361–468 (DVTI…LRQG). The tract at residues 368–395 (PDDDADIGTGTGADGSAERSSNRLGVSV) is disordered.

The protein belongs to the peptidase S1C family.

The protein localises to the periplasm. The catalysed reaction is Acts on substrates that are at least partially unfolded. The cleavage site P1 residue is normally between a pair of hydrophobic residues, such as Val-|-Val.. In terms of biological role, might be efficient in the degradation of transiently denatured and unfolded proteins which accumulate in the periplasm following stress conditions. The sequence is that of Probable periplasmic serine endoprotease DegP-like from Pseudomonas putida (strain W619).